The primary structure comprises 319 residues: 4-diphosphocytidyl-2-C-methyl-D-erythritol kinase (319 aa).

Residue Lys21 is part of the active site. ATP is bound at residue 106–116 (PIGAGLAGGSS). Residue Asp148 is part of the active site.

This sequence belongs to the GHMP kinase family. IspE subfamily.

The catalysed reaction is 4-CDP-2-C-methyl-D-erythritol + ATP = 4-CDP-2-C-methyl-D-erythritol 2-phosphate + ADP + H(+). Its pathway is isoprenoid biosynthesis; isopentenyl diphosphate biosynthesis via DXP pathway; isopentenyl diphosphate from 1-deoxy-D-xylulose 5-phosphate: step 3/6. Catalyzes the phosphorylation of the position 2 hydroxy group of 4-diphosphocytidyl-2C-methyl-D-erythritol. In Prochlorococcus marinus (strain SARG / CCMP1375 / SS120), this protein is 4-diphosphocytidyl-2-C-methyl-D-erythritol kinase.